Consider the following 234-residue polypeptide: Probable glycerol uptake facilitator protein (234 aa).

Helical transmembrane passes span V3–A23 and G36–G56. Residues N64–A66 carry the NPA 1 motif. Helical transmembrane passes span V82–L102, L134–N154, and L164–I184. The short motif at N185 to A187 is the NPA 2 element. A helical transmembrane segment spans residues V214–F234.

The protein belongs to the MIP/aquaporin (TC 1.A.8) family.

Its subcellular location is the cell membrane. The enzyme catalyses glycerol(in) = glycerol(out). Functionally, mediates glycerol diffusion across the cytoplasmic membrane via a pore-type mechanism. The protein is Probable glycerol uptake facilitator protein (glpF) of Thermotoga maritima (strain ATCC 43589 / DSM 3109 / JCM 10099 / NBRC 100826 / MSB8).